A 354-amino-acid polypeptide reads, in one-letter code: MSKYWSNITKNIEPYVCGEQPKNKKIIKLNTNENPYPPSPKVLQAIKNAARDDLRLYPDPNCDALRKTIANYYNLSKEEVFIGNGSDEVLALSFLTFFNPEETVVFSDISYSFYPVYANLYKLDYKLAKIREDFSIDINDFKNARGGAVITNPNAPTGVYLSLDSIKQILEDNVNKVVIVDEAYIDFGGESSVNLIKDYPNVLVIQTLSKSRSLAGMRIGFALGQKELIKGLNRIKNSFNSYTIDRISSLAAIEAIKDEEYFKKCTSKVIKTRNWTINELRKIGFKIIPSKANFIFITHDTYQAEDIFIKLKDENVLVRYFNKDRISNYLRVSIGSKEEMEIFMDKIKKIINKL.

An N6-(pyridoxal phosphate)lysine modification is found at Lys-210.

It belongs to the class-II pyridoxal-phosphate-dependent aminotransferase family. Histidinol-phosphate aminotransferase subfamily. Homodimer. Pyridoxal 5'-phosphate serves as cofactor.

It carries out the reaction L-histidinol phosphate + 2-oxoglutarate = 3-(imidazol-4-yl)-2-oxopropyl phosphate + L-glutamate. Its pathway is amino-acid biosynthesis; L-histidine biosynthesis; L-histidine from 5-phospho-alpha-D-ribose 1-diphosphate: step 7/9. This is Histidinol-phosphate aminotransferase from Clostridium botulinum (strain Okra / Type B1).